A 154-amino-acid chain; its full sequence is Large ribosomal subunit protein uL23y (154 aa).

Belongs to the universal ribosomal protein uL23 family.

Functionally, binds to a specific region on the 26S rRNA. This Arabidopsis thaliana (Mouse-ear cress) protein is Large ribosomal subunit protein uL23y (RPL23AB).